Consider the following 89-residue polypeptide: Defensin-like protein 197 (89 aa).

Residues 1 to 26 form the signal peptide; the sequence is MKFVSVFLVLFIFFLVVLEAPEKIEA. 4 disulfides stabilise this stretch: Cys-33/Cys-86, Cys-46/Cys-70, Cys-55/Cys-81, and Cys-59/Cys-83.

Belongs to the DEFL family. Protease inhibitor I18 (RTI/MTI-2) subfamily.

Its subcellular location is the secreted. The protein is Defensin-like protein 197 (ATTI6) of Arabidopsis thaliana (Mouse-ear cress).